We begin with the raw amino-acid sequence, 218 residues long: N-(5'-phosphoribosyl)anthranilate isomerase (218 aa).

It belongs to the TrpF family.

The enzyme catalyses N-(5-phospho-beta-D-ribosyl)anthranilate = 1-(2-carboxyphenylamino)-1-deoxy-D-ribulose 5-phosphate. It participates in amino-acid biosynthesis; L-tryptophan biosynthesis; L-tryptophan from chorismate: step 3/5. The sequence is that of N-(5'-phosphoribosyl)anthranilate isomerase from Bordetella parapertussis (strain 12822 / ATCC BAA-587 / NCTC 13253).